Consider the following 217-residue polypeptide: 3,4-dihydroxy-2-butanone 4-phosphate synthase (217 aa).

Residues 37–38 (RE), aspartate 42, 150–154 (RGGHT), and glutamate 174 contribute to the D-ribulose 5-phosphate site. Glutamate 38 is a Mg(2+) binding site. Histidine 153 contributes to the Mg(2+) binding site.

Belongs to the DHBP synthase family. In terms of assembly, homodimer. The cofactor is Mg(2+). Mn(2+) is required as a cofactor.

The enzyme catalyses D-ribulose 5-phosphate = (2S)-2-hydroxy-3-oxobutyl phosphate + formate + H(+). The protein operates within cofactor biosynthesis; riboflavin biosynthesis; 2-hydroxy-3-oxobutyl phosphate from D-ribulose 5-phosphate: step 1/1. Its function is as follows. Catalyzes the conversion of D-ribulose 5-phosphate to formate and 3,4-dihydroxy-2-butanone 4-phosphate. This chain is 3,4-dihydroxy-2-butanone 4-phosphate synthase, found in Citrobacter koseri (strain ATCC BAA-895 / CDC 4225-83 / SGSC4696).